Consider the following 83-residue polypeptide: Large ribosomal subunit protein eL37 (83 aa).

4 residues coordinate Zn(2+): Cys-19, Cys-22, Cys-34, and Cys-37. The segment at 19-37 (CRRCGRNSYHVQWERCAAC) adopts a C4-type zinc-finger fold.

Belongs to the eukaryotic ribosomal protein eL37 family. It depends on Zn(2+) as a cofactor.

Its function is as follows. Binds to the 23S rRNA. The polypeptide is Large ribosomal subunit protein eL37 (RPL37) (Leishmania donovani).